Reading from the N-terminus, the 129-residue chain is UPF0325 protein SG1947 (129 aa).

This sequence belongs to the UPF0325 family.

The sequence is that of UPF0325 protein SG1947 from Sodalis glossinidius (strain morsitans).